The following is a 244-amino-acid chain: 7-cyano-7-deazaguanine synthase (244 aa).

Position 14–24 (14–24) interacts with ATP; sequence FSGGQDSATCV. Positions 202, 217, 220, and 223 each coordinate Zn(2+).

This sequence belongs to the QueC family. It depends on Zn(2+) as a cofactor.

It catalyses the reaction 7-carboxy-7-deazaguanine + NH4(+) + ATP = 7-cyano-7-deazaguanine + ADP + phosphate + H2O + H(+). It functions in the pathway purine metabolism; 7-cyano-7-deazaguanine biosynthesis. In terms of biological role, catalyzes the ATP-dependent conversion of 7-carboxy-7-deazaguanine (CDG) to 7-cyano-7-deazaguanine (preQ(0)). This Burkholderia vietnamiensis (strain G4 / LMG 22486) (Burkholderia cepacia (strain R1808)) protein is 7-cyano-7-deazaguanine synthase.